A 605-amino-acid chain; its full sequence is MADRLTRIAIVSSDRCKPKKCRQECKKSCPVVKTGKLCIEVTVGSKLAFISEELCIGCGICVKKCPFEAIQIINLPRDLEKDTTHRYGANTFKLHRLPVPRPGQVLGLVGTNGIGKSTALKILAGKLKPNLGRFTSPPDWQEILTHFRGSELQNYFTRILEDNLKAIIKPQYVDHIPRAVKGNVGEVLDQKDERDKKAELCADLELNQVIDRDVENLSGGELQRFAIAVVAIQNAEIYMFDEPSSYLDVKQRLKAAQVVRSLLRPNSYVIVVEHDLSVLDYLSDFICCLYGKPGAYGVVTLPFSVREGINIFLAGFVPTENLRFRDESLTFKVAETPQESAEEIQSYARYKYPTMTKTQGNFRLRVSEGEFTDSQIIVMLGENGTGKTTFIRMLAGLLKPDDTEGPDREIPEFNVSYKPQKISPKFQNSVRHLLHQKIRDSYMHPQFMSDVMKPLQIEQLMDQEVVNLSGGELQRVALTLCLGKPADIYLIDEPSAYLDSEQRIVASKVIKRFILHAKKTAFVVEHDFIMATYLADRVIVYEGQPSIDCTANCPQSLLSGMNLFLSHLNITFRRDPTNFRPRINKLESTKDREQKSAGSYYYLDD.

The region spanning 46 to 75 is the 4Fe-4S ferredoxin-type domain; it reads KLAFISEELCIGCGICVKKCPFEAIQIINL. ABC transporter domains follow at residues 70 to 315 and 344 to 568; these read IQII…FLAG and IQSY…LSHL. ATP-binding positions include 110 to 117 and 381 to 388; these read GTNGIGKS and GENGTGKT.

Belongs to the ABC transporter superfamily. ABCE family. In terms of tissue distribution, expressed in roots, stems, leaves, flowers and siliques.

It localises to the membrane. The protein is ABC transporter E family member 2 (ABCE2) of Arabidopsis thaliana (Mouse-ear cress).